A 534-amino-acid polypeptide reads, in one-letter code: Monolignol oxidoreductase AtBBE-like 13 (534 aa).

A signal peptide spans 1 to 29 (MAFVLMNNTNAFLVTLLLLSLSYIPLSFS). N-linked (GlcNAc...) asparagine glycans are attached at residues Asn-7 and Asn-59. Cys-38 and Cys-102 are disulfide-bonded. The 6-(S-cysteinyl)-8alpha-(pros-histidyl)-FAD (His-Cys) cross-link spans 117-181 (HDYEGLSYVS…KIHGFPAGLC (65 aa)).

The protein belongs to the oxygen-dependent FAD-linked oxidoreductase family. FAD is required as a cofactor. The FAD cofactor is bound via a bicovalent 6-S-cysteinyl, 8alpha-N1-histidyl FAD linkage.

Its subcellular location is the secreted. The protein localises to the cell wall. The catalysed reaction is (E)-4-coumaroyl alcohol + A = (E)-4-coumaraldehyde + AH2. The enzyme catalyses (E)-coniferol + A = (E)-coniferaldehyde + AH2. It catalyses the reaction (E)-sinapyl alcohol + A = (E)-sinapaldehyde + AH2. The protein operates within phenylpropanoid metabolism. Functionally, mediates oxidation of p-hydroxylated derivatives of cinnamyl alcohol (i.e. the monolignols p-coumaryl-, coniferyl-, and sinapyl alcohol) to their corresponding aldehydes. The electron acceptor required for these reactions is not known, but does not seem to be dioxygen. Is much less efficient towards cinnamyl alcohol. This Arabidopsis thaliana (Mouse-ear cress) protein is Monolignol oxidoreductase AtBBE-like 13.